The following is an 821-amino-acid chain: Enhancer of polycomb-like protein 1 (821 aa).

Residues Met1–Arg12 are compositionally biased toward polar residues. 3 disordered regions span residues Met1–Arg43, Lys427–Met485, and Gln779–Pro799. Composition is skewed to low complexity over residues Ser18–Ser39 and Glu449–Gln465. Positions Glu786–Pro799 are enriched in polar residues.

This sequence belongs to the enhancer of polycomb family. In terms of assembly, component of the NuA4 histone acetyltransferase complex.

Its subcellular location is the nucleus. In terms of biological role, component of the NuA4 histone acetyltransferase complex which is involved in transcriptional activation of selected genes principally by acetylation of nucleosomal histone H4 and H2A. The NuA4 complex is also involved in DNA repair. Involved in gene silencing by neighboring heterochromatin, blockage of the silencing spreading along the chromosome, and required for cell cycle progression through G2/M. This is Enhancer of polycomb-like protein 1 (EPL1) from Candida glabrata (strain ATCC 2001 / BCRC 20586 / JCM 3761 / NBRC 0622 / NRRL Y-65 / CBS 138) (Yeast).